A 212-amino-acid chain; its full sequence is Negative modulator of initiation of replication (212 aa).

Interaction with DNA regions lie at residues 113-114 (AV) and 144-148 (RTRVY).

This sequence belongs to the SeqA family. Homodimer. Polymerizes to form helical filaments.

It is found in the cytoplasm. Functionally, negative regulator of replication initiation, which contributes to regulation of DNA replication and ensures that replication initiation occurs exactly once per chromosome per cell cycle. Binds to pairs of hemimethylated GATC sequences in the oriC region, thus preventing assembly of replication proteins and re-initiation at newly replicated origins. Repression is relieved when the region becomes fully methylated. The chain is Negative modulator of initiation of replication from Actinobacillus succinogenes (strain ATCC 55618 / DSM 22257 / CCUG 43843 / 130Z).